A 209-amino-acid polypeptide reads, in one-letter code: Uracil phosphoribosyltransferase (209 aa).

5-phospho-alpha-D-ribose 1-diphosphate-binding positions include R79, R104, and 131 to 139 (DPMLATGGS). Residues V194 and 199–201 (GDA) contribute to the uracil site. 5-phospho-alpha-D-ribose 1-diphosphate is bound at residue D200.

This sequence belongs to the UPRTase family. Mg(2+) serves as cofactor.

The enzyme catalyses UMP + diphosphate = 5-phospho-alpha-D-ribose 1-diphosphate + uracil. It functions in the pathway pyrimidine metabolism; UMP biosynthesis via salvage pathway; UMP from uracil: step 1/1. Allosterically activated by GTP. Catalyzes the conversion of uracil and 5-phospho-alpha-D-ribose 1-diphosphate (PRPP) to UMP and diphosphate. This is Uracil phosphoribosyltransferase from Bacillus cytotoxicus (strain DSM 22905 / CIP 110041 / 391-98 / NVH 391-98).